Reading from the N-terminus, the 394-residue chain is Phosphopentomutase (394 aa).

Mn(2+)-binding residues include Asp-14, Asp-287, His-292, Asp-328, His-329, and His-340.

Belongs to the phosphopentomutase family. Mn(2+) is required as a cofactor.

It localises to the cytoplasm. It carries out the reaction 2-deoxy-alpha-D-ribose 1-phosphate = 2-deoxy-D-ribose 5-phosphate. The catalysed reaction is alpha-D-ribose 1-phosphate = D-ribose 5-phosphate. It functions in the pathway carbohydrate degradation; 2-deoxy-D-ribose 1-phosphate degradation; D-glyceraldehyde 3-phosphate and acetaldehyde from 2-deoxy-alpha-D-ribose 1-phosphate: step 1/2. Isomerase that catalyzes the conversion of deoxy-ribose 1-phosphate (dRib-1-P) and ribose 1-phosphate (Rib-1-P) to deoxy-ribose 5-phosphate (dRib-5-P) and ribose 5-phosphate (Rib-5-P), respectively. The protein is Phosphopentomutase of Listeria monocytogenes serovar 1/2a (strain ATCC BAA-679 / EGD-e).